A 385-amino-acid polypeptide reads, in one-letter code: Acetate kinase (385 aa).

Residue asparagine 9 participates in Mg(2+) binding. Lysine 16 is an ATP binding site. Residue arginine 87 participates in substrate binding. The active-site Proton donor/acceptor is aspartate 144. Residues 202–206 and 277–279 contribute to the ATP site; these read HLGSG and DMR. Glutamate 373 contributes to the Mg(2+) binding site.

It belongs to the acetokinase family. Homodimer. Mg(2+) is required as a cofactor. Mn(2+) serves as cofactor.

The protein resides in the cytoplasm. It catalyses the reaction acetate + ATP = acetyl phosphate + ADP. The protein operates within metabolic intermediate biosynthesis; acetyl-CoA biosynthesis; acetyl-CoA from acetate: step 1/2. Catalyzes the formation of acetyl phosphate from acetate and ATP. Can also catalyze the reverse reaction. The polypeptide is Acetate kinase (Rickettsia prowazekii (strain Madrid E)).